We begin with the raw amino-acid sequence, 1191 residues long: MLSSNTRGDCSDTAEEMTVDSRDSKDLSAQDIGEQKQQQMEDQLEDQLNDSRDPQNNNNNIDDDADEDAEFEEPEKANPQQDQDLGETEMEQEHDLQQEDLQQELPANSPSTPPRSPSSPQLIPKLEQPATPPSEPEASPCPSPSPCPTPKYPKVRLNALLASDPALKPDAKELTLPDSRLLAPPPLVKPDTQAQPEVAEPLLKPARFMCLPCGIAFSSPSTLEAHQAYYCSHRIKDTDEAGSDKSGAGGSGATAGDAAGLTGGSTEPPAKMARTGKQYGCTQCSYSADKKVSLNRHMRMHQTSPAAPTLAGLPSLLQNGIAPPGVTPNPMEDSSSQQTDRYCSHCDIRFNNIKTYRAHKQHYCSSRRPEGQLTPKPDASPGAGSGPGSAGGSIGVSAQAATPGKLSPQARNKTPTPAMVAVAAAAAAAAASLQATPHSHPPFLALPTHPIIIVPCSLIRAASFIPGPLPTPNSGIVNPETTCFTVDNGTIKPLATALVGATLEPERPSAPSSAAEATEAKSSPPEPKRKEAGLTRESAPLDLSLRRSPITLNSLSLRQRQLRNALLDVEEVLLAGVGTGKENVETPRGGGSVTPEQIVCAPSLPSSPSMSPSPKRRAISPRSSGAGSASSMSPPGLNVAVPHLLDMRSMLPADFGLSESLLAKTNPELALKLAAAAAAAAVAGSSGAAAFPPASLPAQTSSGNPGSGGSAGGAQQPQIYVKKGVSKCMECNIVFCKYENYLAHKQHYCSARSQEGASEVDVKSAVSPSIAGAGGLGAGAAEAASSVETTPVAYQQLICAACGIKYTSLDNLRAHQNYYCPKGGAVAAPAATPTDPGQLGMPKEKCGKCKTLHEIGLPCPPPVANPLAAPTVNPQPATNSLNKCPVCGVVSPTAALAKKHMEMHGTVKAYRCSICQYKGNTLRGMRTHIRTHFDKKTSDVNEELYMTCIFEEDASALSQELVTPTGASTTTGHDSMDHPSQMFNCDYCNYVSTYKGNVLRHMKLMHPHVAINSPSISPDTRDQDVTSNPTTNQHSNSDVSNGEAPSFHIKSEPLDPPPTVNLVHENNNSPIATPHIKAEPIEVGADAAPGGLVPPMTSPLGNSSSVAAAAAAAAEVMKKYCSTCDISFNYVKTYLAHKQFYCKNKPIRPEASDSPSPNHLGGGVAVGLGIGGLVGGHGQQKNKENLQEAAI.

Disordered stretches follow at residues 1-153 (MLSS…PKYP) and 169-194 (PDAK…DTQA). Over residues 19-28 (VDSRDSKDLS) the composition is skewed to basic and acidic residues. A compositionally biased stretch (acidic residues) spans 61–73 (IDDDADEDAEFEE). Phosphoserine occurs at positions 116 and 118. Over residues 130–151 (ATPPSEPEASPCPSPSPCPTPK) the composition is skewed to pro residues. Residues 202-235 (LLKPARFMCLPCGIAFSSPSTLEAHQAYYCSHRI) form a CCHC FOG-type 1 zinc finger. Zn(2+) is bound by residues C210, C213, H226, and C231. The disordered stretch occupies residues 239 to 274 (DEAGSDKSGAGGSGATAGDAAGLTGGSTEPPAKMAR). Over residues 254 to 266 (TAGDAAGLTGGST) the composition is skewed to low complexity. The segment at 279-301 (YGCTQCSYSADKKVSLNRHMRMH) adopts a C2H2-type 1 zinc-finger fold. The disordered stretch occupies residues 304–338 (SPAAPTLAGLPSLLQNGIAPPGVTPNPMEDSSSQQ). The CCHC FOG-type 2 zinc finger occupies 335–368 (SSQQTDRYCSHCDIRFNNIKTYRAHKQHYCSSRR). Residues C343, C346, H359, and C364 each coordinate Zn(2+). 3 disordered regions span residues 361–413 (QHYC…ARNK), 504–540 (EPER…ESAP), and 601–635 (APSL…MSPP). The span at 383–394 (AGSGPGSAGGSI) shows a compositional bias: gly residues. Low complexity-rich tracts occupy residues 509-523 (SAPS…AKSS), 602-613 (PSLPSSPSMSPS), and 620-635 (SPRS…MSPP). 2 consecutive CCHC FOG-type zinc fingers follow at residues 720–753 (YVKK…SARS) and 791–824 (PVAY…PKGG). Zn(2+) is bound by residues C728, C731, H744, C749, C799, C802, H815, and C820. 3 consecutive C2H2-type zinc fingers follow at residues 882–907 (NKCP…HGTV), 910–932 (YRCS…IRTH), and 983–1006 (FNCD…KLMH). Positions 1011–1073 (INSPSISPDT…HENNNSPIAT (63 aa)) are disordered. Residues S1013, S1015, and S1017 each carry the phosphoserine modification. The segment covering 1025–1040 (VTSNPTTNQHSNSDVS) has biased composition (polar residues). The CCHC FOG-type 5 zinc finger occupies 1113 to 1146 (AAEVMKKYCSTCDISFNYVKTYLAHKQFYCKNKP). Zn(2+) is bound by residues C1121, C1124, H1137, and C1142. Phosphoserine is present on S1156.

The protein belongs to the FOG (Friend of GATA) family. As to quaternary structure, interacts with pnr, although weak this interaction is essential. Interacts with the isoform SrpNC of srp. Interacts with CtBP corepressor. As to expression, first expressed in stage 5 at high levels in the primordium of the amnioserosa. Also expressed in germ band extending embryos in cells of the developing anterior and posterior midgut and in hemocyte precursors present in the cephalic mesoderm. In embryonic stage 8, it is expressed in blood cell precursors. By stage 10, it is expressed in hemocyte precursors that have spread throughout the lateral and ventral head mesoderm. By stage 11, it is expressed in the dorsal ectoderm and in precursor cells of the hemocytes and fat body. As embryogenesis proceeds, it is also expressed in stage 13 plasmatocytes migrating throughout the head mesoderm and down the ventral midline. By late embryogenesis, expression strongly decreases but remains in the dorsal ectoderm during dorsal closure, in cells within, or associated with, the central nervous system, and in plasmatocytes circulating throughout the embryonic hemolymph. During larval development, it is expressed in primary and secondary lobes of lymph glands. Expressed in the dorsal part of the thoracic imaginal disk.

It localises to the nucleus. In terms of biological role, transcription regulator that modulates expression mediated by transcription factors of the GATA family such as pnr and srp. Represses transcription of proneural achaete-scute complex (AS-C), which is usually activated by pnr. Involved in cardiogenesis, blood, and eye development. During hematopoiesis, it is required to restrict the number of crystal cells, probably via its interaction with the isoform SrpNC of srp. Negatively regulates expression of sr. Probably acts by interacting with the GATA-type zinc finger of proteins such as pnr and srp, possibly antagonizing the interaction between the GATA-type zinc finger and some cofactor. The sequence is that of Zinc finger protein ush (ush) from Drosophila melanogaster (Fruit fly).